A 256-amino-acid polypeptide reads, in one-letter code: MSEPIHQPFWLDSKPVVFPPTHLAMTEPDGLLAVGGDLTPEWLLNAYHKGIFPWFNEDDPILWWTPNPRSVLFINSLKVRRSLIKTIRKQQFTVTLDQQFEDVMHQCANIERHDQDGTWISEEMLSAYTQLHKSGHAHSVEVWKDNQLVGGLYGVAIGKVFFGESMFSKVPDASKIALVALCQQLKAWGFRIIDTQMETAHLRSLGATLISREYFESILKQETHKDFAPKPWTLEVDWQAPFLAQPTIKKQKTTTP.

Belongs to the L/F-transferase family.

Its subcellular location is the cytoplasm. It catalyses the reaction N-terminal L-lysyl-[protein] + L-leucyl-tRNA(Leu) = N-terminal L-leucyl-L-lysyl-[protein] + tRNA(Leu) + H(+). The enzyme catalyses N-terminal L-arginyl-[protein] + L-leucyl-tRNA(Leu) = N-terminal L-leucyl-L-arginyl-[protein] + tRNA(Leu) + H(+). The catalysed reaction is L-phenylalanyl-tRNA(Phe) + an N-terminal L-alpha-aminoacyl-[protein] = an N-terminal L-phenylalanyl-L-alpha-aminoacyl-[protein] + tRNA(Phe). Functions in the N-end rule pathway of protein degradation where it conjugates Leu, Phe and, less efficiently, Met from aminoacyl-tRNAs to the N-termini of proteins containing an N-terminal arginine or lysine. The protein is Leucyl/phenylalanyl-tRNA--protein transferase of Hydrogenovibrio crunogenus (strain DSM 25203 / XCL-2) (Thiomicrospira crunogena).